The following is a 342-amino-acid chain: 3-isopropylmalate dehydrogenase (342 aa).

Arg-92, Arg-102, Arg-126, and Asp-216 together coordinate substrate. Mg(2+)-binding residues include Asp-216, Asp-240, and Asp-244. 276–288 (GSAPDIAGKGIAD) contributes to the NAD(+) binding site.

Belongs to the isocitrate and isopropylmalate dehydrogenases family. LeuB type 2 subfamily. In terms of assembly, homodimer. Mg(2+) is required as a cofactor. It depends on Mn(2+) as a cofactor.

The protein localises to the cytoplasm. The catalysed reaction is (2R,3S)-3-isopropylmalate + NAD(+) = 4-methyl-2-oxopentanoate + CO2 + NADH. It participates in amino-acid biosynthesis; L-leucine biosynthesis; L-leucine from 3-methyl-2-oxobutanoate: step 3/4. Its function is as follows. Catalyzes the oxidation of 3-carboxy-2-hydroxy-4-methylpentanoate (3-isopropylmalate) to 3-carboxy-4-methyl-2-oxopentanoate. The product decarboxylates to 4-methyl-2 oxopentanoate. In Corynebacterium kroppenstedtii (strain DSM 44385 / JCM 11950 / CIP 105744 / CCUG 35717), this protein is 3-isopropylmalate dehydrogenase.